Consider the following 453-residue polypeptide: Bifunctional protein GlmU (453 aa).

Residues 1-226 (MVAIAILAAG…YEEILGINDR (226 aa)) form a pyrophosphorylase region. Residues 7–10 (LAAG), K21, Q73, and 78–79 (GT) contribute to the UDP-N-acetyl-alpha-D-glucosamine site. Position 103 (D103) interacts with Mg(2+). UDP-N-acetyl-alpha-D-glucosamine contacts are provided by G140, E155, N170, and N224. N224 contributes to the Mg(2+) binding site. The linker stretch occupies residues 227–247 (KQLALAYQILQNRIKDQAMAA). The interval 248–453 (GVTLIDPDSI…GWRLKQPDPT (206 aa)) is N-acetyltransferase. Residues R329 and K347 each coordinate UDP-N-acetyl-alpha-D-glucosamine. H359 (proton acceptor) is an active-site residue. Y362 and N373 together coordinate UDP-N-acetyl-alpha-D-glucosamine. Acetyl-CoA contacts are provided by residues A376, 382 to 383 (NY), S401, A419, and R436.

The protein in the N-terminal section; belongs to the N-acetylglucosamine-1-phosphate uridyltransferase family. This sequence in the C-terminal section; belongs to the transferase hexapeptide repeat family. In terms of assembly, homotrimer. It depends on Mg(2+) as a cofactor.

It is found in the cytoplasm. It carries out the reaction alpha-D-glucosamine 1-phosphate + acetyl-CoA = N-acetyl-alpha-D-glucosamine 1-phosphate + CoA + H(+). The catalysed reaction is N-acetyl-alpha-D-glucosamine 1-phosphate + UTP + H(+) = UDP-N-acetyl-alpha-D-glucosamine + diphosphate. The protein operates within nucleotide-sugar biosynthesis; UDP-N-acetyl-alpha-D-glucosamine biosynthesis; N-acetyl-alpha-D-glucosamine 1-phosphate from alpha-D-glucosamine 6-phosphate (route II): step 2/2. It participates in nucleotide-sugar biosynthesis; UDP-N-acetyl-alpha-D-glucosamine biosynthesis; UDP-N-acetyl-alpha-D-glucosamine from N-acetyl-alpha-D-glucosamine 1-phosphate: step 1/1. It functions in the pathway bacterial outer membrane biogenesis; LPS lipid A biosynthesis. Catalyzes the last two sequential reactions in the de novo biosynthetic pathway for UDP-N-acetylglucosamine (UDP-GlcNAc). The C-terminal domain catalyzes the transfer of acetyl group from acetyl coenzyme A to glucosamine-1-phosphate (GlcN-1-P) to produce N-acetylglucosamine-1-phosphate (GlcNAc-1-P), which is converted into UDP-GlcNAc by the transfer of uridine 5-monophosphate (from uridine 5-triphosphate), a reaction catalyzed by the N-terminal domain. The protein is Bifunctional protein GlmU of Cyanothece sp. (strain PCC 7425 / ATCC 29141).